We begin with the raw amino-acid sequence, 451 residues long: Bifunctional protein GlmU (451 aa).

A pyrophosphorylase region spans residues 1-229 (MQRHAIILAA…FDEIIGVNDR (229 aa)). UDP-N-acetyl-alpha-D-glucosamine is bound by residues 8 to 11 (LAAG), Lys-22, Gln-72, and 77 to 78 (GT). Asp-102 lines the Mg(2+) pocket. Residues Gly-139, Glu-154, and Asn-227 each coordinate UDP-N-acetyl-alpha-D-glucosamine. Asn-227 provides a ligand contact to Mg(2+). Positions 230 to 250 (LMLSEAEKALQQRINRYHMEN) are linker. The interval 251 to 451 (GVTIIDPSST…QVNKEGYLKK (201 aa)) is N-acetyltransferase. UDP-N-acetyl-alpha-D-glucosamine contacts are provided by Arg-332 and Lys-350. The active-site Proton acceptor is His-362. Residues Tyr-365 and Asn-376 each contribute to the UDP-N-acetyl-alpha-D-glucosamine site. Acetyl-CoA is bound by residues 385 to 386 (NY), Ala-422, and Arg-439.

It in the N-terminal section; belongs to the N-acetylglucosamine-1-phosphate uridyltransferase family. The protein in the C-terminal section; belongs to the transferase hexapeptide repeat family. In terms of assembly, homotrimer. Mg(2+) serves as cofactor.

It localises to the cytoplasm. It carries out the reaction alpha-D-glucosamine 1-phosphate + acetyl-CoA = N-acetyl-alpha-D-glucosamine 1-phosphate + CoA + H(+). The catalysed reaction is N-acetyl-alpha-D-glucosamine 1-phosphate + UTP + H(+) = UDP-N-acetyl-alpha-D-glucosamine + diphosphate. It functions in the pathway nucleotide-sugar biosynthesis; UDP-N-acetyl-alpha-D-glucosamine biosynthesis; N-acetyl-alpha-D-glucosamine 1-phosphate from alpha-D-glucosamine 6-phosphate (route II): step 2/2. It participates in nucleotide-sugar biosynthesis; UDP-N-acetyl-alpha-D-glucosamine biosynthesis; UDP-N-acetyl-alpha-D-glucosamine from N-acetyl-alpha-D-glucosamine 1-phosphate: step 1/1. Its pathway is bacterial outer membrane biogenesis; LPS lipid A biosynthesis. Functionally, catalyzes the last two sequential reactions in the de novo biosynthetic pathway for UDP-N-acetylglucosamine (UDP-GlcNAc). The C-terminal domain catalyzes the transfer of acetyl group from acetyl coenzyme A to glucosamine-1-phosphate (GlcN-1-P) to produce N-acetylglucosamine-1-phosphate (GlcNAc-1-P), which is converted into UDP-GlcNAc by the transfer of uridine 5-monophosphate (from uridine 5-triphosphate), a reaction catalyzed by the N-terminal domain. This chain is Bifunctional protein GlmU, found in Staphylococcus epidermidis.